The following is a 148-amino-acid chain: Large ribosomal subunit protein bL9 (148 aa).

The protein belongs to the bacterial ribosomal protein bL9 family.

Binds to the 23S rRNA. This chain is Large ribosomal subunit protein bL9, found in Heliobacterium modesticaldum (strain ATCC 51547 / Ice1).